Consider the following 932-residue polypeptide: Protocadherin gamma-A8 (932 aa).

A signal peptide spans 1 to 29; sequence MAAPQSRPRRGELILLCALLGTLWEIGRG. Cadherin domains are found at residues 30-133, 134-242, 243-347, 348-452, 453-562, and 570-682; these read QIRY…NPKF, QVED…APVF, PHPI…RPEV, IITS…PPTF, PHAS…APEI, and DGST…KPSV. Topologically, residues 30–692 are extracellular; sequence QIRYSVPEET…DPNDSSLTLY (663 aa). N47 carries an N-linked (GlcNAc...) asparagine glycan. N-linked (GlcNAc...) asparagine glycosylation is found at N414, N419, and N545. N-linked (GlcNAc...) asparagine glycosylation occurs at N685. Residues 693–713 form a helical membrane-spanning segment; it reads LVVAVAAISCVFLAFVAVLLG. The Cytoplasmic segment spans residues 714 to 932; it reads LRLRRWHKSR…KKKSGKKEKK (219 aa). Disordered stretches follow at residues 804 to 841 and 902 to 932; these read ADHGQQAPPNTDWRFSQAQRPGTSGSQNGDDTGTWPNN and ATLTNAAGKRDGKAPAGGNGNKKKSGKKEKK. The segment covering 810–841 has biased composition (polar residues); the sequence is APPNTDWRFSQAQRPGTSGSQNGDDTGTWPNN. The span at 922–932 shows a compositional bias: basic residues; it reads NKKKSGKKEKK.

Its subcellular location is the cell membrane. Potential calcium-dependent cell-adhesion protein. May be involved in the establishment and maintenance of specific neuronal connections in the brain. The polypeptide is Protocadherin gamma-A8 (PCDHGA8) (Homo sapiens (Human)).